The primary structure comprises 355 residues: Uroporphyrinogen decarboxylase (355 aa).

Residues 27–31, Asp-78, Tyr-155, Ser-210, and His-328 each bind substrate; that span reads RQAGR.

The protein belongs to the uroporphyrinogen decarboxylase family. In terms of assembly, homodimer.

The protein localises to the cytoplasm. It carries out the reaction uroporphyrinogen III + 4 H(+) = coproporphyrinogen III + 4 CO2. Its pathway is porphyrin-containing compound metabolism; protoporphyrin-IX biosynthesis; coproporphyrinogen-III from 5-aminolevulinate: step 4/4. In terms of biological role, catalyzes the decarboxylation of four acetate groups of uroporphyrinogen-III to yield coproporphyrinogen-III. In Pseudomonas aeruginosa (strain UCBPP-PA14), this protein is Uroporphyrinogen decarboxylase.